The chain runs to 89 residues: Probable Fe(2+)-trafficking protein (89 aa).

It belongs to the Fe(2+)-trafficking protein family.

Its function is as follows. Could be a mediator in iron transactions between iron acquisition and iron-requiring processes, such as synthesis and/or repair of Fe-S clusters in biosynthetic enzymes. The chain is Probable Fe(2+)-trafficking protein from Acinetobacter baumannii (strain SDF).